An 81-amino-acid polypeptide reads, in one-letter code: Large ribosomal subunit protein bL31 (81 aa).

Zn(2+) contacts are provided by cysteine 16, cysteine 18, cysteine 38, and cysteine 41.

It belongs to the bacterial ribosomal protein bL31 family. Type A subfamily. In terms of assembly, part of the 50S ribosomal subunit. The cofactor is Zn(2+).

Functionally, binds the 23S rRNA. The polypeptide is Large ribosomal subunit protein bL31 (Mycobacterium sp. (strain JLS)).